A 1099-amino-acid polypeptide reads, in one-letter code: Solute carrier family 12 member 1 (1099 aa).

Topologically, residues 1–177 (MSLNNSSNVF…EDDQAGVVKF (177 aa)) are cytoplasmic. The short motif at 20–23 (RFQV) is the RFXV motif element. A disordered region spans residues 31–53 (ESSAAADDNTDPPHYEETSFGDE). Serine 61 is subject to Phosphoserine. Residue serine 91 is modified to Phosphoserine; by OXSR1 and STK39. Threonine 95 carries the post-translational modification Phosphothreonine. 2 positions are modified to phosphothreonine; by OXSR1 and STK39: threonine 100 and threonine 105. The residue at position 118 (threonine 118) is a Phosphothreonine. Serine 120 is subject to Phosphoserine. Serine 130 is modified (phosphoserine; by AMPK). Residue serine 148 is modified to Phosphoserine. Residues 178–198 (GWVKGVLVRCMLNIWGVMLFI) form a helical membrane-spanning segment. Topologically, residues 199–201 (RLS) are extracellular. Residues 202–222 (WIVGEAGIGLGVLIILLSTMV) form a helical membrane-spanning segment. Topologically, residues 223 to 259 (TSITGLSTSAIATNGFVRGGGAYYLISRSLGPEFGGS) are cytoplasmic. The chain crosses the membrane as a helical span at residues 260–280 (IGLIFAFANAVAVAMYVVGFA). The Extracellular segment spans residues 281–302 (ETVVDLLKESDSMMVDPTNDIR). A helical transmembrane segment spans residues 303 to 323 (IIGSITVVILLGISVAGMEWE). At 324 to 327 (AKAQ) the chain is on the cytoplasmic side. The chain crosses the membrane as a helical span at residues 328-348 (VILLVILLIAIANFFIGTVIP). Topologically, residues 349–379 (SNNEKKSRGFFNYQASIFAENFGPRFTKGEG) are extracellular. Residues 380–400 (FFSVFAIFFPAATGILAGANI) traverse the membrane as a helical segment. The Cytoplasmic portion of the chain corresponds to 401–417 (SGDLEDPQDAIPRGTML). A helical transmembrane segment spans residues 418–438 (AIFITTVAYLGVAICVGACVV). Over 439 to 550 (RDATGNMNDT…NNEPLRGYIL (112 aa)) the chain is Extracellular. Asparagine 446 and asparagine 456 each carry an N-linked (GlcNAc...) asparagine glycan. The next 2 helical transmembrane spans lie at 551–571 (TFLI…APII) and 572–592 (SNFF…ASYA). The Extracellular segment spans residues 593 to 609 (KSPGWRPAYGIYNMWVS). The chain crosses the membrane as a helical span at residues 610–630 (LFGAVLCCAVMFVINWWAAVI). At 631-1099 (TYVIEFFLYV…NHKNVLTFYS (469 aa)) the chain is on the cytoplasmic side.

It belongs to the SLC12A transporter family. As to quaternary structure, when phosphorylated, interacts with PPP3CB. Post-translationally, phosphorylated at Ser-91, Thr-100 and Thr-105 by OXSR1/OSR1 and STK39/SPAK downstream of WNK kinases (WNK1, WNK2, WNK3 or WNK4), promoting its activity. In terms of tissue distribution, kidney; localizes to the thick ascending limbs (at protein level).

The protein resides in the apical cell membrane. The catalysed reaction is K(+)(out) + 2 chloride(out) + Na(+)(out) = K(+)(in) + 2 chloride(in) + Na(+)(in). With respect to regulation, activated following phosphorylation by OXSR1/OSR1 and STK39/SPAK downstream of WNK kinases (WNK1, WNK2, WNK3 or WNK4). Renal sodium, potassium and chloride ion cotransporter that mediates the transepithelial NaCl reabsorption in the thick ascending limb and plays an essential role in the urinary concentration and volume regulation. Electrically silent transporter system. In Homo sapiens (Human), this protein is Solute carrier family 12 member 1 (SLC12A1).